The sequence spans 382 residues: NADH-ubiquinone oxidoreductase chain 2 (382 aa).

12 consecutive transmembrane segments (helical) span residues methionine 1–leucine 21, phenylalanine 33–cysteine 53, isoleucine 54–leucine 74, leucine 88–leucine 108, leucine 123–methionine 143, phenylalanine 158–valine 178, leucine 188–tryptophan 208, phenylalanine 212–glutamine 232, phenylalanine 239–phenylalanine 259, histidine 260–threonine 280, leucine 284–lysine 304, and alanine 305–phenylalanine 325.

Belongs to the complex I subunit 2 family.

Its subcellular location is the mitochondrion inner membrane. The enzyme catalyses a ubiquinone + NADH + 5 H(+)(in) = a ubiquinol + NAD(+) + 4 H(+)(out). Functionally, core subunit of the mitochondrial membrane respiratory chain NADH dehydrogenase (Complex I) that is believed to belong to the minimal assembly required for catalysis. Complex I functions in the transfer of electrons from NADH to the respiratory chain. The immediate electron acceptor for the enzyme is believed to be ubiquinone. The protein is NADH-ubiquinone oxidoreductase chain 2 (ND2) of Chlamydomonas reinhardtii (Chlamydomonas smithii).